The primary structure comprises 338 residues: Methionine import ATP-binding protein MetN 1 (338 aa).

One can recognise an ABC transporter domain in the interval 2-241 (IEVRSVTKRF…PHSELGVGLL (240 aa)). Residue 38–45 (GQSGAGKT) coordinates ATP.

It belongs to the ABC transporter superfamily. Methionine importer (TC 3.A.1.24) family. In terms of assembly, the complex is composed of two ATP-binding proteins (MetN), two transmembrane proteins (MetI) and a solute-binding protein (MetQ).

It is found in the cell membrane. The catalysed reaction is L-methionine(out) + ATP + H2O = L-methionine(in) + ADP + phosphate + H(+). It carries out the reaction D-methionine(out) + ATP + H2O = D-methionine(in) + ADP + phosphate + H(+). In terms of biological role, part of the ABC transporter complex MetNIQ involved in methionine import. Responsible for energy coupling to the transport system. This Rhodococcus jostii (strain RHA1) protein is Methionine import ATP-binding protein MetN 1.